Consider the following 278-residue polypeptide: 4-diphosphocytidyl-2-C-methyl-D-erythritol kinase (278 aa).

Lys-9 is a catalytic residue. Position 89-99 (89-99 (PVASGIGGGSA)) interacts with ATP. Residue Asp-128 is part of the active site.

It belongs to the GHMP kinase family. IspE subfamily.

The catalysed reaction is 4-CDP-2-C-methyl-D-erythritol + ATP = 4-CDP-2-C-methyl-D-erythritol 2-phosphate + ADP + H(+). It participates in isoprenoid biosynthesis; isopentenyl diphosphate biosynthesis via DXP pathway; isopentenyl diphosphate from 1-deoxy-D-xylulose 5-phosphate: step 3/6. Its function is as follows. Catalyzes the phosphorylation of the position 2 hydroxy group of 4-diphosphocytidyl-2C-methyl-D-erythritol. The protein is 4-diphosphocytidyl-2-C-methyl-D-erythritol kinase of Cereibacter sphaeroides (strain ATCC 17025 / ATH 2.4.3) (Rhodobacter sphaeroides).